The chain runs to 216 residues: Phosphoenolpyruvate guanylyltransferase (216 aa).

The phosphoenolpyruvate site is built by T150, G165, and S168.

The protein belongs to the CofC family.

The enzyme catalyses phosphoenolpyruvate + GTP + H(+) = enolpyruvoyl-2-diphospho-5'-guanosine + diphosphate. It functions in the pathway cofactor biosynthesis; coenzyme F420 biosynthesis. In terms of biological role, guanylyltransferase that catalyzes the activation of phosphoenolpyruvate (PEP) as enolpyruvoyl-2-diphospho-5'-guanosine, via the condensation of PEP with GTP. It is involved in the biosynthesis of coenzyme F420, a hydride carrier cofactor. The polypeptide is Phosphoenolpyruvate guanylyltransferase (Mycobacterium leprae (strain Br4923)).